The chain runs to 144 residues: Ribosome maturation factor RimP (144 aa).

The protein belongs to the RimP family.

The protein localises to the cytoplasm. In terms of biological role, required for maturation of 30S ribosomal subunits. The polypeptide is Ribosome maturation factor RimP (Methylobacillus flagellatus (strain ATCC 51484 / DSM 6875 / VKM B-1610 / KT)).